Reading from the N-terminus, the 566-residue chain is Mannitol 2-dehydrogenase (566 aa).

Ile-106–Ala-117 is an NAD(+) binding site.

It belongs to the mannitol dehydrogenase family. Monomer.

It catalyses the reaction D-mannitol + NAD(+) = D-fructose + NADH + H(+). In terms of biological role, catalyzes the NAD(H)-dependent interconversion of D-fructose and D-mannitol in the mannitol metabolic pathway. In Pyrenophora tritici-repentis (strain Pt-1C-BFP) (Wheat tan spot fungus), this protein is Mannitol 2-dehydrogenase.